A 347-amino-acid polypeptide reads, in one-letter code: NADH-ubiquinone oxidoreductase chain 2 (347 aa).

11 helical membrane-spanning segments follow: residues 3 to 23, 25 to 45, 59 to 79, 96 to 116, 122 to 144, 149 to 171, 178 to 198, 202 to 222, 247 to 267, 276 to 296, and 326 to 346; these read PLIFTMIMLTVILGTTIVMMS, HWLMIWMGFEMNMLAVIPLLM, YFLTQATASMLLMLAVIINLL, IIMTLALGMKMGLAPFHFWVP, ISLSSGLILLTWQKLAPLSVLYV, INLDLILLMSMMSIAIGGWGGLN, ILAYSSIAHMGWMASILVFNP, LLNLLLYILMTTTTFMLFMVA, IMLSLGGLPPLTGFLPKWMII, ITLATLMAITALLNLFFYMRL, and LPVLIILSTITLPLAPAITLL.

The protein belongs to the complex I subunit 2 family. In terms of assembly, core subunit of respiratory chain NADH dehydrogenase (Complex I) which is composed of 45 different subunits. Interacts with TMEM242.

The protein localises to the mitochondrion inner membrane. It catalyses the reaction a ubiquinone + NADH + 5 H(+)(in) = a ubiquinol + NAD(+) + 4 H(+)(out). In terms of biological role, core subunit of the mitochondrial membrane respiratory chain NADH dehydrogenase (Complex I) which catalyzes electron transfer from NADH through the respiratory chain, using ubiquinone as an electron acceptor. Essential for the catalytic activity and assembly of complex I. This is NADH-ubiquinone oxidoreductase chain 2 from Saccopteryx bilineata (Greater white-lined bat).